A 280-amino-acid polypeptide reads, in one-letter code: 4-deoxy-L-threo-5-hexosulose-uronate ketol-isomerase 1 (280 aa).

Zn(2+)-binding residues include His198, His200, Glu205, and His247.

It belongs to the KduI family. Zn(2+) serves as cofactor.

It carries out the reaction 5-dehydro-4-deoxy-D-glucuronate = 3-deoxy-D-glycero-2,5-hexodiulosonate. Its pathway is glycan metabolism; pectin degradation; 2-dehydro-3-deoxy-D-gluconate from pectin: step 4/5. Its function is as follows. Catalyzes the isomerization of 5-dehydro-4-deoxy-D-glucuronate to 3-deoxy-D-glycero-2,5-hexodiulosonate. The sequence is that of 4-deoxy-L-threo-5-hexosulose-uronate ketol-isomerase 1 (kduI1) from Rhizobium meliloti (strain 1021) (Ensifer meliloti).